A 278-amino-acid polypeptide reads, in one-letter code: S-formylglutathione hydrolase YeiG (278 aa).

Catalysis depends on charge relay system residues S145, D223, and H256.

Belongs to the esterase D family.

The catalysed reaction is S-formylglutathione + H2O = formate + glutathione + H(+). Serine hydrolase involved in the detoxification of formaldehyde. Hydrolyzes S-formylglutathione to glutathione and formate. The sequence is that of S-formylglutathione hydrolase YeiG (yeiG) from Escherichia coli O6:K15:H31 (strain 536 / UPEC).